The primary structure comprises 294 residues: Glutamyl-Q tRNA(Asp) synthetase (294 aa).

Residues Arg-7 to Ser-11 and Glu-43 contribute to the L-glutamate site. Residues Pro-10–Ser-20 carry the 'HIGH' region motif. Zn(2+) is bound by residues Cys-99, Cys-101, Tyr-113, and Cys-117. Residues Tyr-168 and Arg-186 each contribute to the L-glutamate site. Positions Lys-224–Gln-228 match the 'KMSKS' region motif. Residue Lys-227 coordinates ATP.

Belongs to the class-I aminoacyl-tRNA synthetase family. GluQ subfamily. It depends on Zn(2+) as a cofactor.

Functionally, catalyzes the tRNA-independent activation of glutamate in presence of ATP and the subsequent transfer of glutamate onto a tRNA(Asp). Glutamate is transferred on the 2-amino-5-(4,5-dihydroxy-2-cyclopenten-1-yl) moiety of the queuosine in the wobble position of the QUC anticodon. The sequence is that of Glutamyl-Q tRNA(Asp) synthetase from Vibrio parahaemolyticus serotype O3:K6 (strain RIMD 2210633).